A 74-amino-acid polypeptide reads, in one-letter code: Translation initiation factor IF-1 (74 aa).

In terms of domain architecture, S1-like spans 1–72 (MSKEDAIEME…NKGRITYRLK (72 aa)).

The protein belongs to the IF-1 family. In terms of assembly, component of the 30S ribosomal translation pre-initiation complex which assembles on the 30S ribosome in the order IF-2 and IF-3, IF-1 and N-formylmethionyl-tRNA(fMet); mRNA recruitment can occur at any time during PIC assembly.

The protein resides in the cytoplasm. In terms of biological role, one of the essential components for the initiation of protein synthesis. Stabilizes the binding of IF-2 and IF-3 on the 30S subunit to which N-formylmethionyl-tRNA(fMet) subsequently binds. Helps modulate mRNA selection, yielding the 30S pre-initiation complex (PIC). Upon addition of the 50S ribosomal subunit IF-1, IF-2 and IF-3 are released leaving the mature 70S translation initiation complex. The polypeptide is Translation initiation factor IF-1 (Synechococcus sp. (strain JA-2-3B'a(2-13)) (Cyanobacteria bacterium Yellowstone B-Prime)).